We begin with the raw amino-acid sequence, 140 residues long: Putative nickel-responsive regulator (140 aa).

The Ni(2+) site is built by histidine 81, histidine 92, histidine 94, and cysteine 100.

The protein belongs to the transcriptional regulatory CopG/NikR family. It depends on Ni(2+) as a cofactor.

Its function is as follows. Transcriptional regulator. This Methanocella arvoryzae (strain DSM 22066 / NBRC 105507 / MRE50) protein is Putative nickel-responsive regulator.